A 333-amino-acid chain; its full sequence is Delta(9)-fatty-acid desaturase fat-5 (333 aa).

A run of 4 helical transmembrane segments spans residues 42-62, 66-86, 187-207, and 210-230; these read NVALFVALHIGALVGLYQLVF, WATVGWVFLLHTLGSMGVTGG, LPLVGIFCFALPTFIPVVLWG, and AFIAFYTAALFRYCFTLHATW.

The protein belongs to the fatty acid desaturase type 1 family. Expressed in the intestine in adult worms and in all four larval stages. Additional expression in the pharynx and tail cells after hatching and throughout the lifespan.

The protein resides in the membrane. The enzyme catalyses hexadecanoyl-CoA + 2 Fe(II)-[cytochrome b5] + O2 + 2 H(+) = (9Z)-hexadecenoyl-CoA + 2 Fe(III)-[cytochrome b5] + 2 H2O. The catalysed reaction is tetradecanoyl-CoA + 2 Fe(II)-[cytochrome b5] + O2 + 2 H(+) = (9Z)-tetradecenoyl-CoA + 2 Fe(III)-[cytochrome b5] + 2 H2O. It catalyses the reaction heptadecanoyl-CoA + 2 Fe(II)-[cytochrome b5] + O2 + 2 H(+) = (9Z)-heptadecenoyl-CoA + 2 Fe(III)-[cytochrome b5] + 2 H2O. It carries out the reaction pentadecanoyl-CoA + 2 Fe(II)-[cytochrome b5] + O2 + 2 H(+) = (9Z)-pentadecenoyl-CoA + 2 Fe(III)-[cytochrome b5] + 2 H2O. The protein operates within lipid metabolism; monounsaturated fatty acid biosynthesis. Delta(9)-fatty acid desaturase that acts preferentially on palmitoyl-CoA (hexadecanoyl-CoA) producing the monounsaturated palmitoleoyl-CoA ((9Z)-hexadecenoyl-CoA), which can be elongated to (11Z)-octadecenoyl-CoA (the most abundant monounsaturated fatty acid in Caenorhabditis elegans phospholipids and triacylglycerols). Also acts on pentadecanoyl-CoA, heptadecanoyl-CoA and myristoyl-CoA (tetradecanoyl-CoA), the monounsaturated fatty acids (MUFAs) produced are further used as substrates to synthesize polyunsaturated fatty acids (PUFAs) by several other desaturases and elongases. Unlike plants, Caenorhabditis elegans desaturases seem to use fatty acyl-CoAs as substrates. In Caenorhabditis elegans, this protein is Delta(9)-fatty-acid desaturase fat-5 (fat-5).